The primary structure comprises 337 residues: Phospholipase A1 1 (337 aa).

The first 21 residues, 1–21, serve as a signal peptide directing secretion; sequence MNFKYSILFICFVKVLDNCYA. The propeptide occupies 22–35; it reads ADDLTTLRNGTLDR. Cysteine 41 and cysteine 124 are oxidised to a cystine. Serine 174 acts as the Nucleophile in catalysis. Aspartate 202 acts as the Charge relay system in catalysis. 2 cysteine pairs are disulfide-bonded: cysteine 213–cysteine 218 and cysteine 256–cysteine 261. Histidine 263 acts as the Charge relay system in catalysis. 3 disulfides stabilise this stretch: cysteine 278/cysteine 305, cysteine 279/cysteine 330, and cysteine 298/cysteine 303.

This sequence belongs to the AB hydrolase superfamily. Lipase family. Expressed by the venom gland.

It is found in the secreted. The enzyme catalyses a 1,2-diacyl-sn-glycero-3-phosphocholine + H2O = a 2-acyl-sn-glycero-3-phosphocholine + a fatty acid + H(+). In terms of biological role, catalyzes the hydrolysis of phosphatidylcholine with phospholipase A1 activity. May act as an allergen and induce hemolytic activity. This is Phospholipase A1 1 from Polistes dominula (European paper wasp).